A 260-amino-acid chain; its full sequence is 2-oxo-tetronate isomerase (260 aa).

The Proton donor/acceptor role is filled by E143. Mg(2+)-binding residues include E143, D178, Q204, and E240. E240 (proton donor/acceptor) is an active-site residue.

The protein belongs to the hyi family. OtnI subfamily.

The catalysed reaction is 2-dehydro-L-erythronate = 3-dehydro-L-erythronate. It catalyses the reaction 2-dehydro-D-erythronate = 3-dehydro-D-erythronate. In terms of biological role, catalyzes the isomerization of 2-oxo-tetronate to 3-oxo-tetronate. The sequence is that of 2-oxo-tetronate isomerase from Cupriavidus necator (strain ATCC 17699 / DSM 428 / KCTC 22496 / NCIMB 10442 / H16 / Stanier 337) (Ralstonia eutropha).